The sequence spans 934 residues: 2-oxoglutarate dehydrogenase E1 component (934 aa).

A compositionally biased stretch (basic and acidic residues) spans 515–537; the sequence is RAAQDKIDKSDKMDNPDMERPES. The disordered stretch occupies residues 515 to 544; that stretch reads RAAQDKIDKSDKMDNPDMERPESLQEPLQS.

Belongs to the alpha-ketoglutarate dehydrogenase family. In terms of assembly, homodimer. Part of the 2-oxoglutarate dehydrogenase (OGDH) complex composed of E1 (2-oxoglutarate dehydrogenase), E2 (dihydrolipoamide succinyltransferase) and E3 (dihydrolipoamide dehydrogenase); the complex contains multiple copies of the three enzymatic components (E1, E2 and E3). Thiamine diphosphate serves as cofactor.

It catalyses the reaction N(6)-[(R)-lipoyl]-L-lysyl-[protein] + 2-oxoglutarate + H(+) = N(6)-[(R)-S(8)-succinyldihydrolipoyl]-L-lysyl-[protein] + CO2. In terms of biological role, E1 component of the 2-oxoglutarate dehydrogenase (OGDH) complex which catalyzes the decarboxylation of 2-oxoglutarate, the first step in the conversion of 2-oxoglutarate to succinyl-CoA and CO(2). The chain is 2-oxoglutarate dehydrogenase E1 component from Staphylococcus haemolyticus (strain JCSC1435).